The following is a 213-amino-acid chain: Receptor-binding cancer antigen expressed on SiSo cells (213 aa).

The Extracellular segment spans residues 1-7; that stretch reads MAITQFR. Residues 8–27 traverse the membrane as a helical; Signal-anchor for type III membrane protein segment; that stretch reads LFKVCTCLATVFSFLKRLIC. The Cytoplasmic portion of the chain corresponds to 28–213; sequence RSGRGRKLSG…EQNKIGVKLS (186 aa). Ser-36 is subject to Phosphoserine. Position 41 is a phosphothreonine (Thr-41). Position 94 is a phosphotyrosine (Tyr-94). A coiled-coil region spans residues 163 to 211; sequence EDAAWQAEEVLRQQKIADREKRAAEQQRKKMEKEAQRLMKKEQNKIGVK. Residues 179-206 show a composition bias toward basic and acidic residues; sequence ADREKRAAEQQRKKMEKEAQRLMKKEQN. Residues 179 to 213 form a disordered region; that stretch reads ADREKRAAEQQRKKMEKEAQRLMKKEQNKIGVKLS.

Homodimer. As to expression, widely expressed. Expressed in heart, brain, spleen, liver, kidney and testis.

It localises to the golgi apparatus membrane. Functionally, may participate in suppression of cell proliferation and induces apoptotic cell death through activation of interleukin-1-beta converting enzyme (ICE)-like proteases. The sequence is that of Receptor-binding cancer antigen expressed on SiSo cells (Ebag9) from Mus musculus (Mouse).